We begin with the raw amino-acid sequence, 585 residues long: Cyclic nucleotide-binding domain-containing protein 2 (585 aa).

Position 116-239 (S116–R239) interacts with a nucleoside 3',5'-cyclic phosphate.

The protein localises to the cytoplasm. Its subcellular location is the cytosol. Essential for male fertility. Plays an important role in spermatogenesis and regulates sperm motility by controlling the development of the flagellar bending of sperm. The chain is Cyclic nucleotide-binding domain-containing protein 2 (CNBD2) from Macaca fascicularis (Crab-eating macaque).